Reading from the N-terminus, the 1428-residue chain is uncharacterized protein (1428 aa).

3 disordered regions span residues 1 to 53, 249 to 274, and 377 to 413; these read MAKK…AFKV, DIKH…KDSK, and KNGI…ETRA. Residues 16 to 33 show a composition bias toward polar residues; that stretch reads ATTSIPSRSASSPANKNQ. A compositionally biased stretch (basic and acidic residues) spans 34 to 51; the sequence is VKGEKNNKTQKVEPKNAF. Over residues 256-265 the composition is skewed to polar residues; sequence KETQPSNQVD. The region spanning 641–811 is the Helicase ATP-binding domain; the sequence is IDAVNNSQLL…FEGSNLITIP (171 aa). 654–661 lines the ATP pocket; sequence GDTGCGKS. The short motif at 758–761 is the DEAH box element; that stretch reads DEVH. In terms of domain architecture, Helicase C-terminal spans 886-1064; that stretch reads LIVYLLKYIF…EVVLRVKMCQ (179 aa).

Belongs to the helicase family. SKI2 subfamily.

It is found in the cytoplasm. This is an uncharacterized protein from Schizosaccharomyces pombe (strain 972 / ATCC 24843) (Fission yeast).